An 80-amino-acid polypeptide reads, in one-letter code: Acyl carrier protein (80 aa).

In terms of domain architecture, Carrier spans 1 to 79; sequence MSQEEILQKV…DAVKFIEAKK (79 aa). Ser39 bears the O-(pantetheine 4'-phosphoryl)serine mark.

Belongs to the acyl carrier protein (ACP) family. In terms of processing, 4'-phosphopantetheine is transferred from CoA to a specific serine of apo-ACP by AcpS. This modification is essential for activity because fatty acids are bound in thioester linkage to the sulfhydryl of the prosthetic group.

The protein localises to the cytoplasm. The protein operates within lipid metabolism; fatty acid biosynthesis. Carrier of the growing fatty acid chain in fatty acid biosynthesis. The polypeptide is Acyl carrier protein (Prochlorococcus marinus (strain MIT 9515)).